We begin with the raw amino-acid sequence, 359 residues long: Peptide chain release factor 1 (359 aa).

Gln236 carries the post-translational modification N5-methylglutamine.

It belongs to the prokaryotic/mitochondrial release factor family. Post-translationally, methylated by PrmC. Methylation increases the termination efficiency of RF1.

The protein resides in the cytoplasm. Its function is as follows. Peptide chain release factor 1 directs the termination of translation in response to the peptide chain termination codons UAG and UAA. This is Peptide chain release factor 1 from Streptococcus pyogenes serotype M6 (strain ATCC BAA-946 / MGAS10394).